Consider the following 157-residue polypeptide: Large ribosomal subunit protein eL24 (157 aa).

A disordered region spans residues 95–157; sequence NQKPEVRKAQ…VSAPRVGGKR (63 aa). The segment covering 96-117 has biased composition (basic and acidic residues); that stretch reads QKPEVRKAQREQAIRAAKEAKK. Residues 123 to 145 show a composition bias toward low complexity; it reads KKQTTQSSKAPAKSAQKQKIAKP.

Belongs to the eukaryotic ribosomal protein eL24 family. In terms of assembly, component of the large ribosomal subunit.

It localises to the cytoplasm. Its function is as follows. Component of the large ribosomal subunit. The ribosome is a large ribonucleoprotein complex responsible for the synthesis of proteins in the cell. Plays an essential role in early embryonic development. The polypeptide is Large ribosomal subunit protein eL24 (rpl24) (Danio rerio (Zebrafish)).